The following is a 288-amino-acid chain: ATP synthase gamma chain (288 aa).

The protein belongs to the ATPase gamma chain family. F-type ATPases have 2 components, CF(1) - the catalytic core - and CF(0) - the membrane proton channel. CF(1) has five subunits: alpha(3), beta(3), gamma(1), delta(1), epsilon(1). CF(0) has three main subunits: a, b and c.

It is found in the cell inner membrane. In terms of biological role, produces ATP from ADP in the presence of a proton gradient across the membrane. The gamma chain is believed to be important in regulating ATPase activity and the flow of protons through the CF(0) complex. The protein is ATP synthase gamma chain of Chromobacterium violaceum (strain ATCC 12472 / DSM 30191 / JCM 1249 / CCUG 213 / NBRC 12614 / NCIMB 9131 / NCTC 9757 / MK).